The chain runs to 776 residues: Serine/threonine-protein kinase SIK1 (776 aa).

The region spanning Y27 to M278 is the Protein kinase domain. Residues L33–V41 and K56 contribute to the ATP site. D149 (proton acceptor) is an active-site residue. T182 carries the phosphothreonine; by LKB1 and GSK3-beta modification. S186 bears the Phosphoserine; by autocatalysis mark. In terms of domain architecture, UBA spans D303–E343. Residue T322 is modified to Phosphothreonine; by CaMK1. Disordered regions lie at residues S350–D371 and E449–R472. S577 carries the post-translational modification Phosphoserine; by PKA. Positions K586 to R612 are RK-rich region. Residues G621–A643 are disordered. Positions T628–A643 are enriched in polar residues.

It belongs to the protein kinase superfamily. CAMK Ser/Thr protein kinase family. AMPK subfamily. In terms of assembly, interacts (when phosphorylated on Thr-182 and Ser-186) with YWHAZ. Interacts with ATP1A1. Requires Mg(2+) as cofactor. Phosphorylated at Thr-182 by STK11/LKB1 in complex with STE20-related adapter-alpha (STRADA) pseudo kinase and CAB39, leading to its activation. Phosphorylation at Thr-182 promotes autophosphorylation at Ser-186, which is required for sustained activity. Autophosphorylation at Ser-186 is maintained by sequential phosphorylation at Thr-182 by GSK3-beta. GSK3-beta cannot initiate phosphorylation at Thr-182, it can only maintain it. Phosphorylation at Ser-577 by PKA promotes translocation to the cytoplasm. Phosphorylation at Thr-322 by CaMK1 following intracellular sodium concentration leads to activation.

Its subcellular location is the cytoplasm. It localises to the nucleus. The enzyme catalyses L-seryl-[protein] + ATP = O-phospho-L-seryl-[protein] + ADP + H(+). The catalysed reaction is L-threonyl-[protein] + ATP = O-phospho-L-threonyl-[protein] + ADP + H(+). With respect to regulation, activated by phosphorylation on Thr-182. Also activated by phosphorylation on Thr-322 in response to increases in intracellular sodium in parallel with elevations in intracellular calcium through the reversible sodium/calcium exchanger. In terms of biological role, serine/threonine-protein kinase involved in various processes such as cell cycle regulation, gluconeogenesis and lipogenesis regulation, muscle growth and differentiation and tumor suppression. Phosphorylates HDAC4, HDAC5, PPME1, SREBF1, CRTC1/TORC1 and CRTC2/TORC2. Acts as a tumor suppressor and plays a key role in p53/TP53-dependent anoikis, a type of apoptosis triggered by cell detachment: required for phosphorylation of p53/TP53 in response to loss of adhesion and is able to suppress metastasis. Part of a sodium-sensing signaling network, probably by mediating phosphorylation of PPME1: following increases in intracellular sodium, SIK1 is activated by CaMK1 and phosphorylates PPME1 subunit of protein phosphatase 2A (PP2A), leading to dephosphorylation of sodium/potassium-transporting ATPase ATP1A1 and subsequent increase activity of ATP1A1. Acts as a regulator of muscle cells by phosphorylating and inhibiting class II histone deacetylases HDAC4 and HDAC5, leading to promote expression of MEF2 target genes in myocytes. Also required during cardiomyogenesis by regulating the exit of cardiomyoblasts from the cell cycle via down-regulation of CDKN1C/p57Kip2. Acts as a regulator of hepatic gluconeogenesis by phosphorylating and repressing the CREB-specific coactivators CRTC1/TORC1 and CRTC2/TORC2, leading to inhibit CREB activity. Also regulates hepatic lipogenesis by phosphorylating and inhibiting SREBF1. In concert with CRTC1/TORC1, regulates the light-induced entrainment of the circadian clock by attenuating PER1 induction; represses CREB-mediated transcription of PER1 by phosphorylating and deactivating CRTC1/TORC1. This chain is Serine/threonine-protein kinase SIK1 (Sik1), found in Rattus norvegicus (Rat).